The chain runs to 213 residues: High frequency lysogenization protein HflD homolog (213 aa).

Residues 79–122 (QGLNAELTRYTLSLMVLERKLSSAKGALNTLGDRINGLQRQLDH) are a coiled coil.

The protein belongs to the HflD family.

The protein resides in the cytoplasm. The protein localises to the cell inner membrane. In Salmonella agona (strain SL483), this protein is High frequency lysogenization protein HflD homolog.